Here is a 674-residue protein sequence, read N- to C-terminus: Electrogenic aspartate/glutamate antiporter SLC25A13, mitochondrial (674 aa).

Ala2 carries the post-translational modification N-acetylalanine. Residues Ala2–Pro295 form a regulatory N-terminal domain region. Residues Ala2–Arg331 lie on the Mitochondrial intermembrane side of the membrane. 4 consecutive EF-hand domains span residues Ser51–Cys86, Ala87–His122, Gln123–Glu157, and Ile158–His193. The Ca(2+) site is built by Asp66, Thr68, Asp70, Leu72, and Glu77. Residues Leu296–Gln311 are linker loop domain. The carrier domain stretch occupies residues Val321–Gly611. Solcar repeat units lie at residues Ala326–Lys418, Val426–Ser510, and Val518–Trp605. The helical transmembrane segment at Phe332 to Ile349 threads the bilayer. Over Asp350–Arg392 the chain is Mitochondrial matrix. An N6-acetyllysine mark is found at Lys353 and Lys372. Residues Gly393–Asn412 traverse the membrane as a helical segment. Over Asp413 to Gly435 the chain is Mitochondrial intermembrane. Residues Gly436–Leu449 traverse the membrane as a helical segment. The Mitochondrial matrix segment spans residues Glu450 to Lys484. Lys453 is subject to N6-methyllysine. At Lys484 the chain carries N6-acetyllysine; alternate. Lys484 carries the post-translational modification N6-succinyllysine; alternate. Residues Gly485–Tyr504 traverse the membrane as a helical segment. At Ala505–Leu523 the chain is on the mitochondrial intermembrane side. Residues Leu524–Ala541 traverse the membrane as a helical segment. At Asp542–Lys580 the chain is on the mitochondrial matrix side. Lys580 bears the N6-succinyllysine mark. A helical transmembrane segment spans residues Gly581–Tyr599. Over Glu600 to Pro674 the chain is Mitochondrial intermembrane. Residues Gly612–Pro674 form a C-terminal domain region. Lys661 is modified (N6-acetyllysine).

Belongs to the mitochondrial carrier (TC 2.A.29) family. In terms of assembly, homodimer (via N-terminus).

Its subcellular location is the mitochondrion inner membrane. The catalysed reaction is L-aspartate(in) + L-glutamate(out) + H(+)(out) = L-aspartate(out) + L-glutamate(in) + H(+)(in). It carries out the reaction 3-sulfino-L-alanine(out) + L-glutamate(in) + H(+)(in) = 3-sulfino-L-alanine(in) + L-glutamate(out) + H(+)(out). The enzyme catalyses 3-sulfino-L-alanine(out) + L-aspartate(in) = 3-sulfino-L-alanine(in) + L-aspartate(out). Mitochondrial electrogenic aspartate/glutamate antiporter that favors efflux of aspartate and entry of glutamate and proton within the mitochondria as part of the malate-aspartate shuttle. Also mediates the uptake of L-cysteinesulfinate (3-sulfino-L-alanine) by mitochondria in exchange of L-glutamate and proton. Can also exchange L-cysteinesulfinate with aspartate in their anionic form without any proton translocation. Lacks transport activity towards gamma-aminobutyric acid (GABA). The chain is Electrogenic aspartate/glutamate antiporter SLC25A13, mitochondrial from Macaca fascicularis (Crab-eating macaque).